Reading from the N-terminus, the 468-residue chain is MNNQPSFRARVQKFGSFLSGMIMPNIGAFIAWGLITALFIPTGWWPNEQLAELVGPMITYLLPLLIGYTGGKMIYDVRGGVVGAAATMGVVVGADIPMFIGAMIMGPLGGFLIKKVDQVLQPKVRSGFEMLVNNFSAGILAAILAIVAFLGIGPVVVSFSNVLASGVEVIIGAGLLPLASIFIEPAKVLFLNNAINHGILSPIGIDQAASAGKSILFLLETNPGPGLGVLLAFMVFGKGMAKQSAPGAAVIHFAGGIHEIYFPYILMKPTLILAVIAGGMSGVFTFVLFNAGLVAVPSPGSIFALLAMTPRGEYAGVLAGVIIATVVSFVIASIILKTSKATAEDLTEATSKMEGLKGKESSVKEALITDDEQPQATEVNKIIFACDAGMGSSAMGASILRDKVKKAGLSIEVANTSINQLPDDVDIIITHKDLTDRAKAKNPHAEHISVENFLSSPKYDELVNRLKS.

The Cytoplasmic segment spans residues 1–25 (MNNQPSFRARVQKFGSFLSGMIMPN). Residues 14-344 (FGSFLSGMIM…ILKTSKATAE (331 aa)) enclose the PTS EIIC type-2 domain. A helical transmembrane segment spans residues 26–47 (IGAFIAWGLITALFIPTGWWPN). Topologically, residues 48-51 (EQLA) are extracellular. Residues 52 to 72 (ELVGPMITYLLPLLIGYTGGK) traverse the membrane as a helical segment. Residues 73–135 (MIYDVRGGVV…SGFEMLVNNF (63 aa)) are Cytoplasmic-facing. Residues 136–157 (SAGILAAILAIVAFLGIGPVVV) form a helical membrane-spanning segment. Over 158–166 (SFSNVLASG) the chain is Extracellular. Residues 167–187 (VEVIIGAGLLPLASIFIEPAK) traverse the membrane as a helical segment. The Cytoplasmic portion of the chain corresponds to 188-274 (VLFLNNAINH…ILMKPTLILA (87 aa)). A helical membrane pass occupies residues 275–294 (VIAGGMSGVFTFVLFNAGLV). At 295-314 (AVPSPGSIFALLAMTPRGEY) the chain is on the extracellular side. A helical membrane pass occupies residues 315-336 (AGVLAGVIIATVVSFVIASIIL). The Cytoplasmic segment spans residues 337-468 (KTSKATAEDL…YDELVNRLKS (132 aa)). Residues 380 to 468 (NKIIFACDAG…YDELVNRLKS (89 aa)) enclose the PTS EIIB type-2 domain. Cys386 functions as the Phosphocysteine intermediate; for EIIB activity in the catalytic mechanism. Phosphocysteine; by EIIA is present on Cys386.

Homodimer.

The protein resides in the cell membrane. It carries out the reaction D-mannitol(out) + N(pros)-phospho-L-histidyl-[protein] = D-mannitol 1-phosphate(in) + L-histidyl-[protein]. Its function is as follows. The phosphoenolpyruvate-dependent sugar phosphotransferase system (sugar PTS), a major carbohydrate active transport system, catalyzes the phosphorylation of incoming sugar substrates concomitantly with their translocation across the cell membrane. The enzyme II CmtAB PTS system is involved in D-mannitol transport. This is PTS system mannitol-specific EIICB component (mtlA) from Halalkalibacterium halodurans (strain ATCC BAA-125 / DSM 18197 / FERM 7344 / JCM 9153 / C-125) (Bacillus halodurans).